The chain runs to 215 residues: Outer-membrane lipoprotein LolB (215 aa).

Positions 1-19 are cleaved as a signal peptide; sequence MSKLRKITSLIFLTIIMVG. C20 carries N-palmitoyl cysteine lipidation. C20 carries the S-diacylglycerol cysteine lipid modification.

The protein belongs to the LolB family. In terms of assembly, monomer.

It localises to the cell outer membrane. Its function is as follows. Plays a critical role in the incorporation of lipoproteins in the outer membrane after they are released by the LolA protein. The polypeptide is Outer-membrane lipoprotein LolB (Vibrio atlanticus (strain LGP32) (Vibrio splendidus (strain Mel32))).